The following is a 555-amino-acid chain: Bifunctional epoxide hydrolase 2 (555 aa).

A phosphatase region spans residues 1–224; that stretch reads MTLRAAVFDL…KVTGIQLLNT (224 aa). The Mg(2+) site is built by Asp9 and Asp11. At Lys43 the chain carries N6-acetyllysine. An N6-succinyllysine modification is found at Lys55. 123 to 124 is a binding site for phosphate; that stretch reads TN. Asp185 is a binding site for Mg(2+). Lys191 and Lys215 each carry N6-acetyllysine. The tract at residues 235-555 is epoxide hydrolase; sequence SDMSHGYVTV…ARNPPVVSKM (321 aa). The 273-residue stretch at 259–531 folds into the AB hydrolase-1 domain; sequence PAVCLCHGFP…CGHWTQMDKP (273 aa). Asp335 acts as the Nucleophile in catalysis. Residue Ser370 is modified to Phosphoserine. Tyr383 is a binding site for substrate. An N6-succinyllysine mark is found at Lys421 and Lys455. The active-site Proton donor is Tyr466. Cys522 is lipidated: S-(15-deoxy-Delta12,14-prostaglandin J2-9-yl)cysteine. Residue His524 is the Proton acceptor of the active site. Residues 553–555 carry the Microbody targeting signal motif; it reads SKM. Lys554 bears the N6-succinyllysine mark.

This sequence belongs to the AB hydrolase superfamily. Epoxide hydrolase family. In terms of assembly, homodimer. The cofactor is Mg(2+). Post-translationally, the N-terminus is blocked. In terms of processing, the covalent modification of cysteine by 15-deoxy-Delta12,14-prostaglandin-J2 is autocatalytic and reversible. It may occur as an alternative to other cysteine modifications, such as S-nitrosylation and S-palmitoylation.

The protein resides in the cytoplasm. The protein localises to the peroxisome. The enzyme catalyses an epoxide + H2O = an ethanediol. It carries out the reaction (9S,10S)-10-hydroxy-9-(phosphooxy)octadecanoate + H2O = (9S,10S)-9,10-dihydroxyoctadecanoate + phosphate. It catalyses the reaction 12-phosphooxy-(9Z)-octadecenoate + H2O = 12-hydroxy-(9Z)-octadecenoate + phosphate. The catalysed reaction is 12-phosphooxy-(9E)-octadecenoate + H2O = 12-hydroxy-(9E)-octadecenoate + phosphate. The enzyme catalyses 12-(phosphooxy)octadecanoate + H2O = 12-hydroxyoctadecanoate + phosphate. It carries out the reaction 8,9-epoxy-(5Z,11Z,14Z)-eicosatrienoate + H2O = 8,9-dihydroxy-(5Z,11Z,14Z)-eicosatrienoate. It catalyses the reaction 11,12-epoxy-(5Z,8Z,14Z)-eicosatrienoate + H2O = 11,12-dihydroxy-(5Z,8Z,14Z)-eicosatrienoate. The catalysed reaction is 14,15-epoxy-(5Z,8Z,11Z)-eicosatrienoate + H2O = 14,15-dihydroxy-(5Z,8Z,11Z)-eicosatrienoate. The enzyme catalyses 9,10-epoxy-(12Z)-octadecenoate + H2O = 9,10-dihydroxy-(12Z)-octadecenoate. It carries out the reaction 8-hydroxy-(11S,12S)-epoxy-(5Z,9E,14Z)-eicosatrienoate + H2O = (8,11R,12S)-trihydroxy-(5Z,9E,14Z)-eicosatrienoate. It catalyses the reaction 10-hydroxy-(11S,12S)-epoxy- (5Z,8Z,14Z)-eicosatrienoate + H2O = (10,11S,12R)-trihydroxy-(5Z,8Z,14Z)-eicosatrienoate. The catalysed reaction is 1-tetradecanoyl-sn-glycerol 3-phosphate + H2O = 1-tetradecanoyl-sn-glycerol + phosphate. The enzyme catalyses 1-octadecanoyl-sn-glycero-3-phosphate + H2O = 1-octadecanoyl-sn-glycerol + phosphate. It carries out the reaction 1-(5Z,8Z,11Z,14Z-eicosatetraenoyl)-sn-glycero-3-phosphate + H2O = 1-(5Z,8Z,11Z,14Z-eicosatetraenoyl)-sn-glycerol + phosphate. It catalyses the reaction 1-hexadecanoyl-sn-glycero-3-phosphate + H2O = 1-hexadecanoyl-sn-glycerol + phosphate. The catalysed reaction is 1-(9Z-octadecenoyl)-sn-glycero-3-phosphate + H2O = 1-(9Z-octadecenoyl)-sn-glycerol + phosphate. The enzyme catalyses (8S,9R)-epoxy-(5Z,11Z,14Z)-eicosatrienoate + H2O = (8S,9S)-dihydroxy-(5Z,11Z,14Z)-eicosatrienoate. It carries out the reaction (11S,12R)-epoxy-(5Z,8Z,14Z)-eicosatrienoate + H2O = (11R,12R)-dihydroxy-(5Z,8Z,14Z)-eicosatrienoate. It catalyses the reaction (11S,12R)-epoxy-(5Z,8Z,14Z)-eicosatrienoate + H2O = (11S,12S)-dihydroxy-(5Z,8Z,14Z)-eicosatrienoate. The catalysed reaction is (14S,15R)-epoxy-(5Z,8Z,11Z)-eicosatrienoate + H2O = (14R,15R)-dihydroxy-(5Z,8Z,11Z)-eicosatrienoate. The enzyme catalyses (14S,15R)-epoxy-(5Z,8Z,11Z)-eicosatrienoate + H2O = (14S,15S)-dihydroxy-(5Z,8Z,11Z)-eicosatrienoate. It carries out the reaction (11R,12S)-epoxy-(5Z,8Z,14Z)-eicosatrienoate + H2O = (11S,12S)-dihydroxy-(5Z,8Z,14Z)-eicosatrienoate. It catalyses the reaction (11R,12S)-epoxy-(5Z,8Z,14Z)-eicosatrienoate + H2O = (11R,12R)-dihydroxy-(5Z,8Z,14Z)-eicosatrienoate. The catalysed reaction is (8S,9R)-epoxy-(5Z,11Z,14Z)-eicosatrienoate + H2O = (8R,9R)-dihydroxy-(5Z,11Z,14Z)-eicosatrienoate. The enzyme catalyses (14R,15S)-epoxy-(5Z,8Z,11Z)-eicosatrienoate + H2O = (14R,15R)-dihydroxy-(5Z,8Z,11Z)-eicosatrienoate. Inhibited by 1-(1-acetylpiperidin-4-yl)-3-(4-(trifl uoromethoxy)phenyl)urea (TPAU), 1-cyclohexyl-3-dodecylurea (CDU), 12-(3-adamantan-1-yl-ureido)-dodecanoic acid (AUDA), 1-((3S, 5S, 7S)-adamantan-1-yl)-3-(5-(2-(2-ethoxyethoxy) ethoxy)pentyl)urea (AEPU), N-adamantyl-N[']-cyclohexyl urea (ACU), 4-(((1S, 4S)-4-(3-((3S, 5S, 7S)-adamantan-1-yl) ureido)cyclohexyl)oxy)benzoic acid (c-AUCB), 4-(((1R, 4R)-4-(3-((3S, 5S, 7S)-adamantan-1-yl)ureido)cyclohexyl)oxy)benzoic acid (t-AUCB), 4-(((1R, 4R)-4-(3-(4(trifluoromethoxy)phenyl)ureido)cyclohexyl)oxy)benzoic acid (t-TAUCB) and to a lesser extent by 8-(3-((3S, 5S, 7S)-adamantan-1-yl)ureido) octanoic acid (AUOA). Phosphatase activity is inhibited by dodecyl-phosphate, phospholipids such as phospho-lysophosphatidic acids and fatty acids such as palmitic acid and lauric acid. In terms of biological role, bifunctional enzyme. The C-terminal domain has epoxide hydrolase activity and acts on epoxides (alkene oxides, oxiranes) and arene oxides. Plays a role in xenobiotic metabolism by degrading potentially toxic epoxides. Also determines steady-state levels of physiological mediators. Bifunctional enzyme. The N-terminal domain has lipid phosphatase activity, with the highest activity towards threo-9,10-phosphonooxy-hydroxy-octadecanoic acid, followed by erythro-9,10-phosphonooxy-hydroxy-octadecanoic acid, 12-phosphonooxy-octadec-9Z-enoic acid and 12-phosphonooxy-octadec-9E-enoic acid. Has phosphatase activity toward lyso-glycerophospholipids with also some lower activity toward lysolipids of sphingolipid and isoprenoid phosphates. This Homo sapiens (Human) protein is Bifunctional epoxide hydrolase 2.